Reading from the N-terminus, the 438-residue chain is Glycosyl hydrolase family 109 protein (438 aa).

A signal peptide (tat-type signal) is located at residues 1 to 33 (MDKTSRRDLLKLASLAGIGAGLARSQGSSKSMA). Residues 52–53 (GR), aspartate 74, 125–128 (WVWH), 145–146 (EV), and asparagine 174 contribute to the NAD(+) site. Substrate-binding positions include tyrosine 203, arginine 221, 233–236 (YPTH), and tyrosine 315. An NAD(+)-binding site is contributed by tyrosine 233. Residues 408–438 (GPLSEASVANGSAPQKFPDFTRGKWQTRQPV) form a disordered region.

The protein belongs to the Gfo/Idh/MocA family. Glycosyl hydrolase 109 subfamily. Requires NAD(+) as cofactor. Post-translationally, predicted to be exported by the Tat system. The position of the signal peptide cleavage has not been experimentally proven.

Functionally, glycosidase. This is Glycosyl hydrolase family 109 protein from Solibacter usitatus (strain Ellin6076).